A 444-amino-acid chain; its full sequence is Squalene synthase ERG9 (444 aa).

A helical membrane pass occupies residues 421–441 (FNMVLSIILSVLLGFYYIYTL).

The protein belongs to the phytoene/squalene synthase family. The cofactor is Mg(2+).

The protein resides in the endoplasmic reticulum membrane. It is found in the microsome. The catalysed reaction is 2 (2E,6E)-farnesyl diphosphate + NADPH + H(+) = squalene + 2 diphosphate + NADP(+). It carries out the reaction 2 (2E,6E)-farnesyl diphosphate + NADH + H(+) = squalene + 2 diphosphate + NAD(+). The protein operates within terpene metabolism; lanosterol biosynthesis; lanosterol from farnesyl diphosphate: step 1/3. Squalene synthase; part of the third module of ergosterol biosynthesis pathway that includes the late steps of the pathway. ERG9 produces squalene from 2 farnesyl pyrophosphate moieties. The third module or late pathway involves the ergosterol synthesis itself through consecutive reactions that mainly occur in the endoplasmic reticulum (ER) membrane. Firstly, the squalene synthase ERG9 catalyzes the condensation of 2 farnesyl pyrophosphate moieties to form squalene, which is the precursor of all steroids. Squalene synthase is crucial for balancing the incorporation of farnesyl diphosphate (FPP) into sterol and nonsterol isoprene synthesis. Secondly, the squalene epoxidase ERG1 catalyzes the stereospecific oxidation of squalene to (S)-2,3-epoxysqualene, which is considered to be a rate-limiting enzyme in steroid biosynthesis. Then, the lanosterol synthase ERG7 catalyzes the cyclization of (S)-2,3 oxidosqualene to lanosterol, a reaction that forms the sterol core. In the next steps, lanosterol is transformed to zymosterol through a complex process involving various demethylation, reduction and desaturation reactions. The lanosterol 14-alpha-demethylase ERG11 (also known as CYP51) catalyzes C14-demethylation of lanosterol to produce 4,4'-dimethyl cholesta-8,14,24-triene-3-beta-ol, which is critical for ergosterol biosynthesis. The C-14 reductase ERG24 reduces the C14=C15 double bond of 4,4-dimethyl-cholesta-8,14,24-trienol to produce 4,4-dimethyl-cholesta-8,24-dienol. 4,4-dimethyl-cholesta-8,24-dienol is substrate of the C-4 demethylation complex ERG25-ERG26-ERG27 in which ERG25 catalyzes the three-step monooxygenation required for the demethylation of 4,4-dimethyl and 4alpha-methylsterols, ERG26 catalyzes the oxidative decarboxylation that results in a reduction of the 3-beta-hydroxy group at the C-3 carbon to an oxo group, and ERG27 is responsible for the reduction of the keto group on the C-3. ERG28 has a role as a scaffold to help anchor ERG25, ERG26 and ERG27 to the endoplasmic reticulum and ERG29 regulates the activity of the iron-containing C4-methylsterol oxidase ERG25. Then, the sterol 24-C-methyltransferase ERG6 catalyzes the methyl transfer from S-adenosyl-methionine to the C-24 of zymosterol to form fecosterol. The C-8 sterol isomerase ERG2 catalyzes the reaction which results in unsaturation at C-7 in the B ring of sterols and thus converts fecosterol to episterol. The sterol-C5-desaturase ERG3 then catalyzes the introduction of a C-5 double bond in the B ring to produce 5-dehydroepisterol. The C-22 sterol desaturase ERG5 further converts 5-dehydroepisterol into ergosta-5,7,22,24(28)-tetraen-3beta-ol by forming the C-22(23) double bond in the sterol side chain. Finally, ergosta-5,7,22,24(28)-tetraen-3beta-ol is substrate of the C-24(28) sterol reductase ERG4 to produce ergosterol. This Saccharomyces cerevisiae (strain ATCC 204508 / S288c) (Baker's yeast) protein is Squalene synthase ERG9.